The following is a 257-amino-acid chain: Indole-3-glycerol phosphate synthase (257 aa).

The protein belongs to the TrpC family.

The catalysed reaction is 1-(2-carboxyphenylamino)-1-deoxy-D-ribulose 5-phosphate + H(+) = (1S,2R)-1-C-(indol-3-yl)glycerol 3-phosphate + CO2 + H2O. It participates in amino-acid biosynthesis; L-tryptophan biosynthesis; L-tryptophan from chorismate: step 4/5. This Phenylobacterium zucineum (strain HLK1) protein is Indole-3-glycerol phosphate synthase.